Reading from the N-terminus, the 156-residue chain is Snaclec rhinocetin subunit alpha (156 aa).

The signal sequence occupies residues 1-23 (MGRFIFLSSGWLVVFLSLSGTGA). 3 cysteine pairs are disulfide-bonded: cysteine 27/cysteine 38, cysteine 55/cysteine 150, and cysteine 125/cysteine 142. The 118-residue stretch at 34–151 (YEGHCYKFFF…CGDNYPFVCM (118 aa)) folds into the C-type lectin domain.

It belongs to the snaclec family. Heterodimer; disulfide-linked. In terms of tissue distribution, expressed by the venom gland.

Its subcellular location is the secreted. In terms of biological role, antagonist of the alpha-2 subunit of the integrin alpha-2/beta-1 (ITGA2/ITGB1) on human platelets and endothelial cells. This protein inhibits collagen-stimulated activation of human platelets in a dose-dependent manner. In addition, it antagonizes the binding of monoclonal antibodies against the alpha-2 subunit of integrin alpha-2/beta-1 to platelets and it coimmunoprecipitates with this integrin. In Bitis rhinoceros (West African gaboon viper), this protein is Snaclec rhinocetin subunit alpha.